A 440-amino-acid polypeptide reads, in one-letter code: Xylose isomerase (440 aa).

Residues His-101 and Asp-104 contribute to the active site. The Mg(2+) site is built by Glu-232, Glu-268, His-271, Asp-296, Asp-307, Asp-309, and Asp-339.

The protein belongs to the xylose isomerase family. In terms of assembly, homotetramer. Mg(2+) serves as cofactor.

The protein localises to the cytoplasm. The catalysed reaction is alpha-D-xylose = alpha-D-xylulofuranose. This Salmonella agona (strain SL483) protein is Xylose isomerase.